We begin with the raw amino-acid sequence, 1285 residues long: MTPPQMVSQLDDARLDERQRAILDRQLHGLGGETKQRKNVFAYATVSDRIVLSVSSICAVLAGALNPLVPVIYGLLVSVYDGFAAGTVSASELRSKTATFSLYYVYLSIGLFAFTYVATVGFYYTGERMARALRTTYLAAILRQNMAFFDLLGPGEITSRIMSDMGTVQEAVTSKLAVMLTAIATFCAAFVVAFIMYWKTALIISPFFVIMIVTETLGGAYMVRHHKRAMELYSQAAGIAEEAIAAIKHVTAFGIQTLLSQRYLSVLEQAAKADRKAENMVAGMIAWMNAMPNLIYALAFWAGSIYLTRGQMSVAEVSATTLAVTIGSFAIIRIAPSAQALLSGIAITGEILKSIARRSPQDPLVKEGDEPSTVVGDIVLDRVGLIYPSRDDVDILQDVSLRCAAMKKTAIVGSSGSGKSSILGLVERFYEPTSGTVLLDGRDIQSLNLRWLRRQIALVDQMPVLFNATILENILYGCSDMVSQWSESEQLDRVVQASKKANAHDFISALPDGYHTHVGEKGLQLSGGQRQRVAIARALIRDPKILLLDEATSALDSKSEAMVQEALDAAAEHRTTIIVAHRLSTIQNADHIIVLDHGKVVEEGTHHALVAQNGAYAALVQKQQIGDTHDHKAPDGARLSIEDDDDEDSRYGGNTEYVDEKDIRTEEVALSSAAHDEGTQRDSLKLSALQTIAFIARLSKRDWKVLLFGLANAILAGLTIPVQSVFFAKILTVIGFPPPQYPQLRSEVDFWSGLYVMLTGTTFLFWMGVEIALSYATQKLARRVREVCFRSILVQDMAFFDVPGNSPSALSSVLSKSTNDLAGLGGPVMGGILTFLSTILAGIVLALAIGWKLALVCTATIPIVVACGWLRLQVLSTFDSKVRQSGIESAAYAGELVRTVRTVASLGLEEHALARYEGILAKQAAKSLRSILLASALYAASASVVYLCAALAFWYGGTLIASHEYSTFQVYICFVSLISGSQIAGSIFTYAPDASKAMHASREIQDIMNLKPSINKVAPTGPPPAHEGTEKNQPQQNLSACRVEFEHVSFTYPSRPTRRALDNLHITVEPGQTLALVGQSGSGKSTCVSLLERFYDPDQGRILIDGQDIKLRDVDEYRRDISLVSQETIIFSGTIRDNITVGLAGQEVSDDEILEACKQANILEFVQSLPDGLSTLVGTGGSMLSGGQKQRIAIARAFLRKPKILLLDEATSALDSQSEAIVQEAMDAIRKDRTTIMVAHRLSTVQNADVICVLQDGKLLEIGTHEQLLGKRGKYWEMVSMQSLH.

The region spanning 54 to 343 (VSSICAVLAG…IAPSAQALLS (290 aa)) is the ABC transmembrane type-1 1 domain. Helical transmembrane passes span 57 to 77 (ICAVLAGALNPLVPVIYGLLV), 102 to 122 (LYYVYLSIGLFAFTYVATVGF), 176 to 196 (LAVMLTAIATFCAAFVVAFIM), 203 to 223 (IISPFFVIMIVTETLGGAYMV), 281 to 301 (VAGMIAWMNAMPNLIYALAFW), and 312 to 332 (MSVAEVSATTLAVTIGSFAII). The 243-residue stretch at 380-622 (LDRVGLIYPS…NGAYAALVQK (243 aa)) folds into the ABC transporter 1 domain. 413 to 420 (GSSGSGKS) serves as a coordination point for ATP. Asparagine 467 is a glycosylation site (N-linked (GlcNAc...) asparagine). Residues 627 to 654 (DTHDHKAPDGARLSIEDDDDEDSRYGGN) are disordered. 6 consecutive transmembrane segments (helical) span residues 707–727 (LFGLANAILAGLTIPVQSVFF), 753–773 (GLYVMLTGTTFLFWMGVEIAL), 831–851 (GILTFLSTILAGIVLALAIGW), 855–875 (LVCTATIPIVVACGWLRLQVL), 931–951 (ILLASALYAASASVVYLCAAL), and 968–988 (FQVYICFVSLISGSQIAGSIF). Positions 713-996 (AILAGLTIPV…IFTYAPDASK (284 aa)) constitute an ABC transmembrane type-1 2 domain. The N-linked (GlcNAc...) asparagine glycan is linked to asparagine 1037. One can recognise an ABC transporter 2 domain in the interval 1043–1281 (VEFEHVSFTY…RGKYWEMVSM (239 aa)). 1078–1085 (GQSGSGKS) contacts ATP. N-linked (GlcNAc...) asparagine glycosylation is present at asparagine 1138.

Belongs to the ABC transporter superfamily. ABCB family. Multidrug resistance exporter (TC 3.A.1.201) subfamily.

Its subcellular location is the membrane. It functions in the pathway secondary metabolite biosynthesis. In terms of biological role, ABC-type transporter; part of the gene cluster that mediates the biosynthesis of the isoquinoline alkaloids fumisoquin A, fumisoquin B and fumisoquin C; as well as small amounts of fumipyrrole as a shunt metabolite. The products of the cluster lead to a brown coloration and are important for growth and conidiation. FsqE possibly plays a role of self-protection. The protein is ABC-type transporter fsqE of Aspergillus fumigatus (strain ATCC MYA-4609 / CBS 101355 / FGSC A1100 / Af293) (Neosartorya fumigata).